A 744-amino-acid polypeptide reads, in one-letter code: Polyadenylate-binding protein, cytoplasmic and nuclear (744 aa).

Over residues 1 to 11 (MSEVANSTSPV) the composition is skewed to polar residues. A disordered region spans residues 1–42 (MSEVANSTSPVQDGADANGAQINTNVPAASGDAPTPTTAAQQ). Residues 33-42 (APTPTTAAQQ) show a composition bias toward low complexity. 4 RRM domains span residues 48–126 (ASLY…WSQR), 136–213 (GNVF…HHIP), 229–306 (TNIY…RAQK), and 332–462 (VNLY…LAQR). 4 disordered regions span residues 368–411 (EEKK…AGDK), 527–550 (GRGAGFPGGMPGQQGGRGGPNAQQ), 607–651 (IAGG…PGVD), and 723–744 (VKNKEGDGEKEAPKEESKEEKA). The segment covering 376-397 (KEVKEEKKEDEKKEDEEAKEGS) has biased composition (basic and acidic residues). Gly residues-rich tracts occupy residues 527 to 545 (GRGAGFPGGMPGQQGGRGG), 609 to 632 (GGPGIRGGQGGFPQGGRGAPGGRG), and 640 to 649 (PQGGRPGGPG). The region spanning 647–724 (GPGVDMSVLS…AMSVYDEYVK (78 aa)) is the PABC domain.

This sequence belongs to the polyadenylate-binding protein type-1 family.

The protein localises to the cytoplasm. Its subcellular location is the nucleus. Its function is as follows. Binds the poly(A) tail of mRNA. Appears to be an important mediator of the multiple roles of the poly(A) tail in mRNA biogenesis, stability and translation. In the nucleus, involved in both mRNA cleavage and polyadenylation. Is also required for efficient mRNA export to the cytoplasm. Acts in concert with a poly(A)-specific nuclease (PAN) to affect poly(A) tail shortening, which may occur concomitantly with either nucleocytoplasmic mRNA transport or translational initiation. In the cytoplasm, stimulates translation initiation and regulates mRNA decay through translation termination-coupled poly(A) shortening, probably mediated by PAN. This is Polyadenylate-binding protein, cytoplasmic and nuclear (PAB1) from Phaeosphaeria nodorum (strain SN15 / ATCC MYA-4574 / FGSC 10173) (Glume blotch fungus).